Consider the following 817-residue polypeptide: TPR repeat-containing protein C19B12.01 (817 aa).

Disordered regions lie at residues 276–298 and 386–413; these read DQKS…PNHP and GKSP…DGEN. TPR repeat units lie at residues 459-492, 521-554, 555-588, and 625-658; these read LQMW…DPYD, APAQ…NPLS, YPTW…NPED, and WRIW…KGKD.

The chain is TPR repeat-containing protein C19B12.01 from Schizosaccharomyces pombe (strain 972 / ATCC 24843) (Fission yeast).